Consider the following 437-residue polypeptide: MTVSFPFPRIPDPGVPVLVAFSGGLDSTVLLHCLASQPTQRIHGLEAIHIHHGLHEHADAWTAHCAAFCTQHYIRLHIARVHVSHNSGQGLEAAARTARRAAFAHTLQHGHYLALAHHCDDQAETWLLRALRGSCDGLAAMRPLTPFAAGHLWRPLLTHSRAQLLDYAQQQHLDWIEDSSNADLRHDRNFLRIHVLPLLHQRWPQATAVLARNAALAAANADLLNAEDAVLLPDLLDPDGALDINALTAHPPARRARLLRAWCARAGAPPLPERGVNIIERELLPARHDSAACFTWSHTEIRRWRLRLYLHRPQPPWPPDWQPLWSGITPLILPDGGQLHLESTDHDTVPGFPHPLCVRARRGGERLILPGRTHSHPLKHLLQDIGIPPWRRASMPLLCDGEQILAAGDALLAAPLVTWLHAHRLKLRWQSHNNTCI.

22–27 (SGGLDS) lines the ATP pocket.

It belongs to the tRNA(Ile)-lysidine synthase family.

The protein localises to the cytoplasm. It catalyses the reaction cytidine(34) in tRNA(Ile2) + L-lysine + ATP = lysidine(34) in tRNA(Ile2) + AMP + diphosphate + H(+). In terms of biological role, ligates lysine onto the cytidine present at position 34 of the AUA codon-specific tRNA(Ile) that contains the anticodon CAU, in an ATP-dependent manner. Cytidine is converted to lysidine, thus changing the amino acid specificity of the tRNA from methionine to isoleucine. The chain is tRNA(Ile)-lysidine synthase from Xylella fastidiosa (strain 9a5c).